A 221-amino-acid polypeptide reads, in one-letter code: MSKILSAEFHQRHSLVVARELLGCSLVRRLATGEELRGRIVETEAYTPDDPSCHAHRRNTPRARSMFALGGISYVYIIYGIYHCLNVVTQGLGEGAAVLIRAIEPLSGNATMAQLVQKDPANPMRIASGPGMVCRALAVDKSLDGVDLSSQQAGLWFEQGPSLPDQAILQTPRIGINSDPHTVAAPWRLIVADSKALSGTRRQNQGQAYQAQPDWFQKQAI.

It belongs to the DNA glycosylase MPG family.

The sequence is that of Putative 3-methyladenine DNA glycosylase from Herpetosiphon aurantiacus (strain ATCC 23779 / DSM 785 / 114-95).